We begin with the raw amino-acid sequence, 160 residues long: Complexin-4 (160 aa).

Positions 14–44 (KNLGFGGGSEEKKEEGGTSDPAAAKGMTREE) are disordered. Position 157 is a cysteine methyl ester (Cys-157). Cys-157 carries the S-farnesyl cysteine lipid modification. Residues 158 to 160 (SVM) constitute a propeptide, removed in mature form.

The protein belongs to the complexin/synaphin family. In terms of assembly, weakly binds to the SNARE core complex containing SNAP25, VAMP2 and STX1A. Farnesylation mediates presynaptic targeting and is important for function in neurotransmitter release. As to expression, present specifically in the retina (at protein level). Expressed in the outer nuclear layer of the retina (at protein level). Strongly expressed at rod photoreceptor ribbon synapses (at protein level). Not expressed at conventional amacrine cell synapses, nor at cone photoreceptor ribbon synapses (at protein level). Weakly expressed at cone photoreceptor synaptic terminals (at protein level). Not expressed in the brain (at protein level).

The protein localises to the synapse. It localises to the cell membrane. Its function is as follows. Complexin that regulates SNARE protein complex-mediated synaptic vesicle fusion. Required for the maintenance of synaptic ultrastructure in the adult retina. Positively regulates synaptic transmission through synaptic vesicle availability and exocytosis of neurotransmitters at photoreceptor ribbon synapses in the retina. Suppresses tonic photoreceptor activity and baseline 'noise' by suppression of Ca(2+) vesicle tonic release and the facilitation of evoked synchronous and asynchronous Ca(2+) vesicle release. The polypeptide is Complexin-4 (Cplx4) (Mus musculus (Mouse)).